The primary structure comprises 69 residues: Large ribosomal subunit protein eL38z/eL38y (69 aa).

This sequence belongs to the eukaryotic ribosomal protein eL38 family.

The sequence is that of Large ribosomal subunit protein eL38z/eL38y (RPL38A) from Arabidopsis thaliana (Mouse-ear cress).